Reading from the N-terminus, the 180-residue chain is Ribosome maturation factor RimM (180 aa).

The PRC barrel domain maps to P97–L169.

This sequence belongs to the RimM family. In terms of assembly, binds ribosomal protein uS19.

The protein localises to the cytoplasm. In terms of biological role, an accessory protein needed during the final step in the assembly of 30S ribosomal subunit, possibly for assembly of the head region. Essential for efficient processing of 16S rRNA. May be needed both before and after RbfA during the maturation of 16S rRNA. It has affinity for free ribosomal 30S subunits but not for 70S ribosomes. The protein is Ribosome maturation factor RimM of Bacteroides fragilis (strain YCH46).